The following is a 407-amino-acid chain: MATLHFVPQHEEEQVYSISGKALKLTTSDDIKPYLEELAALKTCTKLDLSGNTIGTEASEALAKCIAENTQVRESLVEVNFADLYTSRLVDEVVDSLKFLLPVLLKCPHLEIVNLSDNAFGLRTIELLEDYIAHAVNIKHLILSNNGMGPFAGERIGKALFHLAQNKKAASKPFLETFICGRNRLENGSAVYLALGLKSHSEGLKVVKLYQNGIRPKGVATLIHYGLQYLKNLEILDLQDNTFTKHASLILAKALPTWKDSLFELNLNDCLLKTAGSDEVFKVFTEVKFPNLHVLKFEYNEMAQETIEVSFLPAMEKGNLPELEKLEINGNRLDEDSDALDLLQSKFDDLEVDDFEEVDSEDEEGEDEEDEDEDEKLEEIETERLEKELLEVQVDDLAERLAETEIK.

11 LRR repeats span residues 11-39, 40-67, 68-101, 102-133, 134-166, 167-197, 198-226, 227-256, 257-285, 286-315, and 316-346; these read EEEQ…EELA, ALKT…KCIA, ENTQ…KFLL, PVLL…DYIA, HAVN…LAQN, KKAA…ALGL, KSHS…IHYG, LQYL…KALP, TWKD…KVFT, EVKF…LPAM, and EKGN…LQSK. The tract at residues 353–378 is disordered; it reads DDFEEVDSEDEEGEDEEDEDEDEKLE. At Ser-360 the chain carries Phosphoserine.

It belongs to the RNA1 family.

It is found in the cytoplasm. Functionally, GTPase activator for the nuclear Ras-related regulatory protein GSP1 (Ran), converting it to the putatively inactive GDP-bound state. This chain is Ran GTPase-activating protein 1 (RNA1), found in Saccharomyces cerevisiae (strain ATCC 204508 / S288c) (Baker's yeast).